Consider the following 230-residue polypeptide: Pyridoxal phosphate homeostasis protein (230 aa).

N6-(pyridoxal phosphate)lysine is present on lysine 36.

This sequence belongs to the pyridoxal phosphate-binding protein YggS/PROSC family.

Perhaps involved in proline biosynthesis. In terms of biological role, pyridoxal 5'-phosphate (PLP)-binding protein, which is involved in PLP homeostasis. This chain is Pyridoxal phosphate homeostasis protein, found in Pseudomonas aeruginosa (strain ATCC 15692 / DSM 22644 / CIP 104116 / JCM 14847 / LMG 12228 / 1C / PRS 101 / PAO1).